A 123-amino-acid chain; its full sequence is Small ribosomal subunit protein uS12 (123 aa).

The interval 1 to 32 (MPTIQQLVRKGRKDKKAKVKTAALKGSPQRRG) is disordered. The segment covering 9–19 (RKGRKDKKAKV) has biased composition (basic residues). 3-methylthioaspartic acid is present on Asp89.

The protein belongs to the universal ribosomal protein uS12 family. In terms of assembly, part of the 30S ribosomal subunit. Contacts proteins S8 and S17. May interact with IF1 in the 30S initiation complex.

Its function is as follows. With S4 and S5 plays an important role in translational accuracy. Functionally, interacts with and stabilizes bases of the 16S rRNA that are involved in tRNA selection in the A site and with the mRNA backbone. Located at the interface of the 30S and 50S subunits, it traverses the body of the 30S subunit contacting proteins on the other side and probably holding the rRNA structure together. The combined cluster of proteins S8, S12 and S17 appears to hold together the shoulder and platform of the 30S subunit. The polypeptide is Small ribosomal subunit protein uS12 (Corynebacterium kroppenstedtii (strain DSM 44385 / JCM 11950 / CIP 105744 / CCUG 35717)).